The following is a 592-amino-acid chain: Probable auxin efflux carrier component 1c (592 aa).

Topologically, residues 1–6 (MITGAD) are extracellular. The chain crosses the membrane as a helical span at residues 7–27 (FYHVMTAMVPLYVAMILAYGS). Over 28-38 (VKWWRIFTPDQ) the chain is Cytoplasmic. The chain crosses the membrane as a helical span at residues 39–59 (CSGINRFVALFAVPLLSFHFI). (indol-3-yl)acetate is bound at residue valine 51. The Extracellular segment spans residues 60 to 70 (STNNPYTMNLR). The helical transmembrane segment at 71–91 (FIAADTLQKLIVLALLTLWSH) threads the bilayer. Topologically, residues 92–100 (LSRRGSLEW) are cytoplasmic. The chain crosses the membrane as a helical span at residues 101–121 (TITLFSLSTLPNTLVMGIPLL). 2 residues coordinate (indol-3-yl)acetate: asparagine 112 and leucine 114. Topologically, residues 122-131 (KGMYGEFSGS) are extracellular. Residues 132–152 (LMVQIVVLQCIIWYTLMLFMF) traverse the membrane as a helical segment. Tyrosine 145 serves as a coordination point for (indol-3-yl)acetate. Topologically, residues 153 to 452 (EYRGARILIT…LIRNPNTYSS (300 aa)) are cytoplasmic. Disordered stretches follow at residues 214 to 236 (RSDV…SNLT) and 282 to 331 (GATP…AKGE). Polar residues predominate over residues 224 to 236 (GFSSTTPRPSNLT). A compositionally biased stretch (pro residues) spans 309-318 (APNPAMAAPP). A helical transmembrane segment spans residues 453–473 (LIGLIWSLVCFRWNFEMPAII). Residues 474–476 (LKS) are Extracellular-facing. The helical transmembrane segment at 477–497 (ISILSDAGLGMAMFSLGLFMA) threads the bilayer. Residues 498-511 (LQPRIIACGNKVAT) lie on the Cytoplasmic side of the membrane. The helical transmembrane segment at 512 to 532 (FAMAVRFLTGPAVMAAASIAV) threads the bilayer. The Extracellular portion of the chain corresponds to 533–537 (GLRGT). A helical transmembrane segment spans residues 538 to 558 (LLHVAIVQAALPQGIVPFVFA). Residues isoleucine 552 and valine 553 each coordinate (indol-3-yl)acetate. Residues 559–571 (KEYSVHPDILSTA) lie on the Cytoplasmic side of the membrane. A helical transmembrane segment spans residues 572-592 (VIFGMLIALPITLVYYILLGL).

The protein belongs to the auxin efflux carrier (TC 2.A.69.1) family. As to quaternary structure, homodimer. Expressed at low levels in roots and leaves. Expressed in roots, stem bases, stems, leaves and young panicles.

It localises to the membrane. May act as a component of the auxin efflux carrier. This chain is Probable auxin efflux carrier component 1c, found in Oryza sativa subsp. japonica (Rice).